We begin with the raw amino-acid sequence, 79 residues long: NADH-ubiquinone oxidoreductase chain 4 (79 aa).

The next 2 membrane-spanning stretches (helical) occupy residues Ser-24–Ile-44 and Leu-54–Leu-74.

It belongs to the complex I subunit 4 family.

It localises to the mitochondrion membrane. It catalyses the reaction a ubiquinone + NADH + 5 H(+)(in) = a ubiquinol + NAD(+) + 4 H(+)(out). In terms of biological role, core subunit of the mitochondrial membrane respiratory chain NADH dehydrogenase (Complex I) that is believed to belong to the minimal assembly required for catalysis. Complex I functions in the transfer of electrons from NADH to the respiratory chain. The immediate electron acceptor for the enzyme is believed to be ubiquinone. This chain is NADH-ubiquinone oxidoreductase chain 4 (ND4), found in Simulium vittatum (Striped black fly).